The primary structure comprises 249 residues: Adenosylcobinamide-GDP ribazoletransferase (249 aa).

7 consecutive transmembrane segments (helical) span residues 29–49 (LYWF…CAWL), 50–70 (PLSI…GFIV), 104–124 (VGSF…VAIL), 131–151 (AFAL…LLAA), 165–185 (GFVG…SLMM), 194–214 (PFLL…IGFL), and 226–246 (VLGA…GVAF).

This sequence belongs to the CobS family. It depends on Mg(2+) as a cofactor.

It localises to the cell inner membrane. It carries out the reaction alpha-ribazole + adenosylcob(III)inamide-GDP = adenosylcob(III)alamin + GMP + H(+). It catalyses the reaction alpha-ribazole 5'-phosphate + adenosylcob(III)inamide-GDP = adenosylcob(III)alamin 5'-phosphate + GMP + H(+). The protein operates within cofactor biosynthesis; adenosylcobalamin biosynthesis; adenosylcobalamin from cob(II)yrinate a,c-diamide: step 7/7. Its function is as follows. Joins adenosylcobinamide-GDP and alpha-ribazole to generate adenosylcobalamin (Ado-cobalamin). Also synthesizes adenosylcobalamin 5'-phosphate from adenosylcobinamide-GDP and alpha-ribazole 5'-phosphate. The polypeptide is Adenosylcobinamide-GDP ribazoletransferase (Chlorobium phaeovibrioides (strain DSM 265 / 1930) (Prosthecochloris vibrioformis (strain DSM 265))).